Here is a 178-residue protein sequence, read N- to C-terminus: Inner membrane-spanning protein YciB (178 aa).

A run of 5 helical transmembrane segments spans residues 22-42, 50-70, 72-92, 121-141, and 149-169; these read IFYASGALIAATGLAVAMTYF, ASLITFIMVAVFGTLTLAFHS, LFIKWKVTVIYALFALALLGS, MAWALFFTACALANIYVAFWL, and FKVFGLTALTLVFTVLSVVYI.

This sequence belongs to the YciB family.

The protein localises to the cell inner membrane. Functionally, plays a role in cell envelope biogenesis, maintenance of cell envelope integrity and membrane homeostasis. This chain is Inner membrane-spanning protein YciB, found in Photorhabdus laumondii subsp. laumondii (strain DSM 15139 / CIP 105565 / TT01) (Photorhabdus luminescens subsp. laumondii).